The following is a 445-amino-acid chain: MREVISIHVGQAGIQIGNACWELFCLEHGIQPDGQMPSDKTIGGGDDAFNTFFSETGAEKHVPRCVFLDLEPTVIDEVRTGTYRQLFHPEQLISGKEDAANNFARGHYTIGKEIVDLCLDRIRKLADQCTGLQGFLVFNSVGGGTGSGLGSLLLERLSVDYGKKSKLGFTVYPSPQVSTAVVEPYNSVLSTHSLLEHTDVAVMLDNEAVYDICRRNLDIERPTYTNLNRLIAQVISSLTASLRFDGALNVDVTEFQTNLVPYPSVIIRPSTPAEKAYHEQLSVAEITNSAFEPASMMAKCDPRHGKYMACCLMYRGDVVPKDVNAAVATIKTKRTIQFVDWCPTGFKCGINYQPPTVVPSGDPAKVMRAVCMISNSTAIAEVFSRIDHKFDLMYAKRAFVHWYVGEGMEEGEFSEVREDLAALEKDYEEVGIEIVEGEGEEEGME.

GTP is bound at residue Gln-11. Lys-40 is subject to N6-acetyllysine. GTP is bound by residues Glu-71, Ser-140, Gly-144, Thr-145, Thr-179, Asn-206, and Asn-228. Residue Glu-71 coordinates Mg(2+). Glu-254 is a catalytic residue.

Belongs to the tubulin family. As to quaternary structure, dimer of alpha and beta chains. A typical microtubule is a hollow water-filled tube with an outer diameter of 25 nm and an inner diameter of 15 nM. Alpha-beta heterodimers associate head-to-tail to form protofilaments running lengthwise along the microtubule wall with the beta-tubulin subunit facing the microtubule plus end conferring a structural polarity. Microtubules usually have 13 protofilaments but different protofilament numbers can be found in some organisms and specialized cells. Mg(2+) is required as a cofactor. In terms of processing, acetylation of alpha chains at Lys-40 stabilizes microtubules and affects affinity and processivity of microtubule motors. This modification has a role in multiple cellular functions, ranging from cell motility, cell cycle progression or cell differentiation to intracellular trafficking and signaling.

The protein resides in the cytoplasm. The protein localises to the cytoskeleton. The catalysed reaction is GTP + H2O = GDP + phosphate + H(+). Functionally, tubulin is the major constituent of microtubules, a cylinder consisting of laterally associated linear protofilaments composed of alpha- and beta-tubulin heterodimers. Microtubules grow by the addition of GTP-tubulin dimers to the microtubule end, where a stabilizing cap forms. Below the cap, tubulin dimers are in GDP-bound state, owing to GTPase activity of alpha-tubulin. This chain is Tubulin alpha-1 chain, found in Stylonychia lemnae (Ciliate).